The following is a 619-amino-acid chain: Chaperone protein HscA homolog (619 aa).

Belongs to the heat shock protein 70 family.

Its function is as follows. Chaperone involved in the maturation of iron-sulfur cluster-containing proteins. Has a low intrinsic ATPase activity which is markedly stimulated by HscB. The sequence is that of Chaperone protein HscA homolog from Haemophilus influenzae (strain 86-028NP).